A 70-amino-acid chain; its full sequence is Small ribosomal subunit protein bS21 (70 aa).

This sequence belongs to the bacterial ribosomal protein bS21 family.

The sequence is that of Small ribosomal subunit protein bS21 from Delftia acidovorans (strain DSM 14801 / SPH-1).